The chain runs to 233 residues: Purine nucleoside phosphorylase DeoD-type (233 aa).

Position 4 (His-4) interacts with a purine D-ribonucleoside. Phosphate-binding positions include Gly-20, Arg-24, Arg-43, and 87–90; that span reads RVGT. Residues 178 to 180 and 202 to 203 contribute to the a purine D-ribonucleoside site; these read EME and SD. Asp-203 (proton donor) is an active-site residue.

The protein belongs to the PNP/UDP phosphorylase family. Homohexamer; trimer of homodimers.

The catalysed reaction is a purine D-ribonucleoside + phosphate = a purine nucleobase + alpha-D-ribose 1-phosphate. It catalyses the reaction a purine 2'-deoxy-D-ribonucleoside + phosphate = a purine nucleobase + 2-deoxy-alpha-D-ribose 1-phosphate. In terms of biological role, catalyzes the reversible phosphorolytic breakdown of the N-glycosidic bond in the beta-(deoxy)ribonucleoside molecules, with the formation of the corresponding free purine bases and pentose-1-phosphate. In Listeria innocua serovar 6a (strain ATCC BAA-680 / CLIP 11262), this protein is Purine nucleoside phosphorylase DeoD-type.